We begin with the raw amino-acid sequence, 433 residues long: Serine--tRNA ligase (433 aa).

235–237 (TSE) contacts L-serine. 266-268 (RSE) lines the ATP pocket. Position 289 (glutamate 289) interacts with L-serine. 353–356 (EISS) contacts ATP. Serine 388 is a binding site for L-serine.

The protein belongs to the class-II aminoacyl-tRNA synthetase family. Type-1 seryl-tRNA synthetase subfamily. As to quaternary structure, homodimer. The tRNA molecule binds across the dimer.

It localises to the cytoplasm. It carries out the reaction tRNA(Ser) + L-serine + ATP = L-seryl-tRNA(Ser) + AMP + diphosphate + H(+). It catalyses the reaction tRNA(Sec) + L-serine + ATP = L-seryl-tRNA(Sec) + AMP + diphosphate + H(+). It functions in the pathway aminoacyl-tRNA biosynthesis; selenocysteinyl-tRNA(Sec) biosynthesis; L-seryl-tRNA(Sec) from L-serine and tRNA(Sec): step 1/1. Catalyzes the attachment of serine to tRNA(Ser). Is also able to aminoacylate tRNA(Sec) with serine, to form the misacylated tRNA L-seryl-tRNA(Sec), which will be further converted into selenocysteinyl-tRNA(Sec). The chain is Serine--tRNA ligase from Burkholderia pseudomallei (strain 668).